Here is a 179-residue protein sequence, read N- to C-terminus: Bifunctional protein PyrR (179 aa).

Substrate is bound by residues 39-40, 101-109, Arg-134, and Val-158; these read RR and DDVLFTGRT. The short motif at 97–109 is the PRPP-binding element; it reads VILIDDVLFTGRT.

This sequence belongs to the purine/pyrimidine phosphoribosyltransferase family. PyrR subfamily.

It catalyses the reaction UMP + diphosphate = 5-phospho-alpha-D-ribose 1-diphosphate + uracil. Functionally, regulates the transcription of the pyrimidine nucleotide (pyr) operon in response to exogenous pyrimidines. Its function is as follows. Also displays a weak uracil phosphoribosyltransferase activity which is not physiologically significant. This Haemophilus ducreyi (strain 35000HP / ATCC 700724) protein is Bifunctional protein PyrR.